A 255-amino-acid chain; its full sequence is tRNA (guanine-N(1)-)-methyltransferase (255 aa).

S-adenosyl-L-methionine-binding positions include Gly-113 and 133 to 138 (VGDFVL).

It belongs to the RNA methyltransferase TrmD family. In terms of assembly, homodimer.

It is found in the cytoplasm. It carries out the reaction guanosine(37) in tRNA + S-adenosyl-L-methionine = N(1)-methylguanosine(37) in tRNA + S-adenosyl-L-homocysteine + H(+). Functionally, specifically methylates guanosine-37 in various tRNAs. The sequence is that of tRNA (guanine-N(1)-)-methyltransferase from Francisella philomiragia subsp. philomiragia (strain ATCC 25017 / CCUG 19701 / FSC 153 / O#319-036).